We begin with the raw amino-acid sequence, 286 residues long: EIQRRFLTCGDPSLQCDYGVIMVYGVQFSTIELSSNERPKACSDTEAKNGPSNRCDGNEKCDVATSGSVCDLCNSAYLTNIFLDVTYGCLESKKVTTCEGVVHLECGDGVVFLQKALYGRIDSQTCSQGRPQSQLTNTKCSQEGTLALWSQRCDGKQTCEVNMRVNQISDPCVGTYKYLDVTYICLPAKTSITCEGSTSSLDCGKGVIKVFHANYGRRDGSTCSAGRHELSNQNCLQPKTLDVVKQWCEGKSQCTLGLDPVFGDPCFGTYKYLEVSYTCLGGSPTV.

SUEL-type lectin domains are found at residues 96 to 186 (TTCE…YICL) and 193 to 280 (TCEG…YTCL).

In terms of biological role, L-rhamnose binding lectin. Has hemagglutinating activity towards rabbit erythrocytes, but not human type B erythrocytes. Hemagglutinating activity is inhibited by smooth-type lipopolysaccharide (LPS) from K.pneumoniae, E.coli K-235, S.flexneri 1A, A.salmonicida and S.minnesota and rough-type LPS from S.flexneri, but not by rough-type LPS from E.coli K12 and E.coli EH100. Agglutinates E.coli K12 and B.subtilis. The polypeptide is L-rhamnose-binding lectin CSL1 (Oncorhynchus keta (Chum salmon)).